The primary structure comprises 492 residues: Cytochrome P450 monooxygenase rdc4 (492 aa).

Cysteine 435 contributes to the heme binding site.

This sequence belongs to the cytochrome P450 family. Heme serves as cofactor.

Its pathway is secondary metabolite biosynthesis. Cytochrome P450 monooxygenase; part of the gene cluster that mediates the biosynthesis of radicicol, a resorcylic acid lactone (RAL) that irreversibly inhibits the HSP90 molecular chaperone, an important target for cancer chemotherapy. The radicicol cluster encodes only two apparent post-PKS enzymes, a cytochrome P450 monooxygenase (rdc4) and a non-heme halogenase (rdc2) that could introduce the epoxide and the chlorine, respectively. If this cluster includes all the genes required for radicicol biosynthesis, the remaining structural features of radicicol are presumably generated by the PKSs rdc1 and rdc5. The C-2' ketone could arise if the R-PKS rdc5 and NR-PKS rdc1 each carry out four iterations, in contrast to the five iteration-three iteration split for the hypothemycin PKSs. The origin of the cis 5',6' double bond is not known. The radicicol R-PKS rdc5 ER domain may catalyze either double bond isomerization or reduction in the third iteration. This Metacordyceps chlamydosporia (Nematophagous fungus) protein is Cytochrome P450 monooxygenase rdc4.